A 208-amino-acid chain; its full sequence is Small ribosomal subunit protein eS8 (208 aa).

The disordered stretch occupies residues 1-37 (MGISRDNWHKRRKTGGKRKPYHKKRKYEPGRPAANTK). Residues 8 to 26 (WHKRRKTGGKRKPYHKKRK) show a composition bias toward basic residues.

This sequence belongs to the eukaryotic ribosomal protein eS8 family. Component of the small ribosomal subunit. Identified in a IGF2BP1-dependent mRNP granule complex containing untranslated mRNAs. Part of the small subunit (SSU) processome, composed of more than 70 proteins and the RNA chaperone small nucleolar RNA (snoRNA) U3.

The protein resides in the cytoplasm. It localises to the membrane. The protein localises to the nucleus. Its subcellular location is the nucleolus. Its function is as follows. Component of the small ribosomal subunit. The ribosome is a large ribonucleoprotein complex responsible for the synthesis of proteins in the cell. Part of the small subunit (SSU) processome, first precursor of the small eukaryotic ribosomal subunit. During the assembly of the SSU processome in the nucleolus, many ribosome biogenesis factors, an RNA chaperone and ribosomal proteins associate with the nascent pre-rRNA and work in concert to generate RNA folding, modifications, rearrangements and cleavage as well as targeted degradation of pre-ribosomal RNA by the RNA exosome. This chain is Small ribosomal subunit protein eS8 (rps8), found in Xenopus laevis (African clawed frog).